Reading from the N-terminus, the 176-residue chain is Large ribosomal subunit protein uL6 (176 aa).

The protein belongs to the universal ribosomal protein uL6 family. In terms of assembly, part of the 50S ribosomal subunit.

This protein binds to the 23S rRNA, and is important in its secondary structure. It is located near the subunit interface in the base of the L7/L12 stalk, and near the tRNA binding site of the peptidyltransferase center. The protein is Large ribosomal subunit protein uL6 of Burkholderia cenocepacia (strain HI2424).